The following is a 433-amino-acid chain: Xylose isomerase (433 aa).

Residues His99 and Asp102 contribute to the active site. Residues Glu230, Glu266, His269, Asp294, Asp305, Asp307, and Asp337 each contribute to the Mg(2+) site.

Belongs to the xylose isomerase family. As to quaternary structure, homotetramer. Requires Mg(2+) as cofactor.

It is found in the cytoplasm. It carries out the reaction alpha-D-xylose = alpha-D-xylulofuranose. The polypeptide is Xylose isomerase (Cereibacter sphaeroides (strain ATCC 17025 / ATH 2.4.3) (Rhodobacter sphaeroides)).